Consider the following 71-residue polypeptide: Large ribosomal subunit protein uL29 (71 aa).

It belongs to the universal ribosomal protein uL29 family.

This is Large ribosomal subunit protein uL29 from Methanocella arvoryzae (strain DSM 22066 / NBRC 105507 / MRE50).